Here is a 126-residue protein sequence, read N- to C-terminus: MNRHKAREKAFQVLFQLDINETELEEVMETLKEKERYDVFLRSLVEGVIQHKSVIDEKISTHLEKWTIDRIASVERTILRMAILEIMYIDDIPQNVSINEAIELAHTFGDEQSGKFVNGVLSKIIA.

This sequence belongs to the NusB family.

In terms of biological role, involved in transcription antitermination. Required for transcription of ribosomal RNA (rRNA) genes. Binds specifically to the boxA antiterminator sequence of the ribosomal RNA (rrn) operons. The sequence is that of Transcription antitermination protein NusB from Oceanobacillus iheyensis (strain DSM 14371 / CIP 107618 / JCM 11309 / KCTC 3954 / HTE831).